A 468-amino-acid chain; its full sequence is Cysteine--tRNA ligase (468 aa).

Position 27 (C27) interacts with Zn(2+). The 'HIGH' region signature appears at 29–39; sequence PTVYDDAHLGH. Residues C204, H234, and E238 each contribute to the Zn(2+) site. The 'KMSKS' region motif lies at 266 to 270; sequence KMSKS. K269 is an ATP binding site.

It belongs to the class-I aminoacyl-tRNA synthetase family. In terms of assembly, monomer. Zn(2+) is required as a cofactor.

The protein resides in the cytoplasm. It catalyses the reaction tRNA(Cys) + L-cysteine + ATP = L-cysteinyl-tRNA(Cys) + AMP + diphosphate. The sequence is that of Cysteine--tRNA ligase from Campylobacter hominis (strain ATCC BAA-381 / DSM 21671 / CCUG 45161 / LMG 19568 / NCTC 13146 / CH001A).